The sequence spans 108 residues: L-rhamnose mutarotase (108 aa).

Residue tyrosine 19 participates in substrate binding. Residue histidine 23 is the Proton donor of the active site. Substrate is bound by residues tyrosine 45 and tryptophan 80–tryptophan 81.

This sequence belongs to the rhamnose mutarotase family. As to quaternary structure, homodimer.

The protein resides in the cytoplasm. The enzyme catalyses alpha-L-rhamnose = beta-L-rhamnose. It participates in carbohydrate metabolism; L-rhamnose metabolism. Its function is as follows. Involved in the anomeric conversion of L-rhamnose. The chain is L-rhamnose mutarotase from Ligilactobacillus salivarius (strain UCC118) (Lactobacillus salivarius).